The following is a 609-amino-acid chain: Mitochondrial nucleoid-associated protein 1 (609 aa).

The Extracellular segment spans residues 1–554 (MSDNPPRMEV…CNTTIRKSGF (554 aa)). Disordered stretches follow at residues 133–163 (QEET…GESR) and 406–425 (SPEG…QASH). Basic and acidic residues predominate over residues 146-161 (TSPKRELAEDLPKSGE). The chain crosses the membrane as a helical span at residues 555–571 (GGITMLSTGYFVLCCSW). Residues 572-609 (SFRRLKKLCRPLPWKSTVPPSVGVAKTTGDCRSKTCLD) are Cytoplasmic-facing.

Its subcellular location is the mitochondrion inner membrane. The protein localises to the mitochondrion matrix. It localises to the mitochondrion nucleoid. In terms of biological role, critical regulator of mitochondrial DNA (mtDNA) abundance. Binds dsDNA throughout the mitochondrial genome without sequence specificity and controls mtDNA copy number by promoting its replication. Also plays important roles in mitochondrial metabolism and cell proliferation. This is Mitochondrial nucleoid-associated protein 1 from Pongo abelii (Sumatran orangutan).